The chain runs to 249 residues: Type III pantothenate kinase (249 aa).

6–13 (DCGNSFIK) contacts ATP. Substrate contacts are provided by residues Y93 and 100–103 (GLDR). D102 acts as the Proton acceptor in catalysis. A K(+)-binding site is contributed by D122. An ATP-binding site is contributed by T125. T181 lines the substrate pocket.

The protein belongs to the type III pantothenate kinase family. In terms of assembly, homodimer. Requires NH4(+) as cofactor. The cofactor is K(+).

It is found in the cytoplasm. The enzyme catalyses (R)-pantothenate + ATP = (R)-4'-phosphopantothenate + ADP + H(+). Its pathway is cofactor biosynthesis; coenzyme A biosynthesis; CoA from (R)-pantothenate: step 1/5. Its function is as follows. Catalyzes the phosphorylation of pantothenate (Pan), the first step in CoA biosynthesis. In Pseudomonas syringae pv. syringae (strain B728a), this protein is Type III pantothenate kinase.